The following is an 89-amino-acid chain: UPF0147 protein Msed_2034 (89 aa).

Belongs to the UPF0147 family.

This Metallosphaera sedula (strain ATCC 51363 / DSM 5348 / JCM 9185 / NBRC 15509 / TH2) protein is UPF0147 protein Msed_2034.